We begin with the raw amino-acid sequence, 731 residues long: Small conductance calcium-activated potassium channel protein 3 (731 aa).

The span at 1–11 (MDTSGHFHDSG) shows a compositional bias: basic and acidic residues. Disordered stretches follow at residues 1-170 (MDTS…SNPF) and 239-258 (ATHN…FPKA). Residues 30 to 40 (QQQQQQQQQQQ) show a composition bias toward low complexity. Positions 41-51 (QPPPPAPPAAP) are enriched in pro residues. Residues 52 to 95 (QQPLGPSLQPQPPQLQQQQQQQQQQQQQQPPHPLSQLAQLQSQP) are compositionally biased toward low complexity. Residues 112-132 (PSSNSTAILHPSSRQGSQLNL) are compositionally biased toward polar residues. Positions 138–147 (GHSPSSTATS) are enriched in low complexity. Ser167 is modified (phosphoserine). Residues 239–256 (ATHNHQHAGTTASSTTFP) are compositionally biased toward polar residues. A helical membrane pass occupies residues 288 to 308 (LIFGMFGIVVMVIETELSWGL). A helical transmembrane segment spans residues 315–335 (FSLALKCLISLSTIILLGLII). Residues 366-386 (ISLEMLVCAIHPIPGEYKFFW) form a helical membrane-spanning segment. A helical membrane pass occupies residues 405-425 (IILSIPMFLRLYLIARVMLLH). A helical membrane pass occupies residues 454 to 474 (LMTICPGTVLLVFSISLWIIA). The pore-forming intramembrane region spans 494–514 (FLGAMWLISITFLSIGYGDMV). A helical transmembrane segment spans residues 523 to 543 (VCLLTGIMGAGCTALVVAVVA). Residues 561–637 (DTQLTKRIKN…LVDLSKMQNV (77 aa)) form a calmodulin-binding region. The stretch at 642–669 (ITELNDRSEDLEKQIGSLESKLEHLTAS) forms a coiled coil. Residues 709-731 (ISDSPIGVSSTSFPTPYTSSSSC) form a disordered region. Residues 717-731 (SSTSFPTPYTSSSSC) are compositionally biased toward low complexity.

The protein belongs to the potassium channel KCNN family. KCa2.3/KCNN3 subfamily. As to quaternary structure, homodimer. Heteromultimer with KCNN2 or KCNN1; this modulates plasma membrane expression and consequently the small conductance calcium-activated potassium channel activity. The complex is composed of 4 channel subunits each of which binds to a calmodulin subunit which regulates the channel activity through calcium-binding. Interacts with CALM1. In terms of tissue distribution, widely distributed in human tissues and is present at 20-60% of KCNN3 in the brain.

The protein resides in the cell membrane. Its subcellular location is the cytoplasm. The protein localises to the myofibril. It is found in the sarcomere. It localises to the z line. It catalyses the reaction K(+)(in) = K(+)(out). With respect to regulation, inhibited by bee venom neurotoxin apamin. Functionally, small conductance calcium-activated potassium channel that mediates the voltage-independent transmembrane transfer of potassium across the cell membrane through a constitutive interaction with calmodulin which binds the intracellular calcium allowing its opening. The current is characterized by a voltage-independent activation, an intracellular calcium concentration increase-dependent activation and a single-channel conductance of 10 picosiemens. Also presents an inwardly rectifying current, thus reducing its already small outward conductance of potassium ions, which is particularly the case when the membrane potential displays positive values, above + 20 mV. Activation is followed by membrane hyperpolarization. Thought to regulate neuronal excitability by contributing to the slow component of synaptic afterhyperpolarization. In terms of biological role, does not function as a small conductance calcium-activated potassium channel. Selectively suppresses endogenous KCNN3 currents, in a dominant-negative fashion by decreasing the abundance of functional channels in the plasma membrane, possibly by selectively coassembling with and sequestering native KCNN3 protein in intracellular compartments. This dominant inhibitory effect extends to other members of the SK subfamily. In Homo sapiens (Human), this protein is Small conductance calcium-activated potassium channel protein 3.